The sequence spans 66 residues: Phylloseptin-H9 (66 aa).

The N-terminal stretch at 1 to 22 is a signal peptide; sequence MAFLKKSLFLVLFLGLVSLSIC. Residues 23–44 constitute a propeptide that is removed on maturation; sequence EEEKRETEEEENDQEEDDKSEE. Residues 24 to 44 are disordered; that stretch reads EEKRETEEEENDQEEDDKSEE. A compositionally biased stretch (acidic residues) spans 30 to 41; that stretch reads EEEENDQEEDDK. Leucine amide is present on leucine 65.

In terms of tissue distribution, expressed by the skin glands.

It is found in the secreted. Has antimicrobial activity. This is Phylloseptin-H9 from Pithecopus hypochondrialis (Orange-legged leaf frog).